Here is a 58-residue protein sequence, read N- to C-terminus: Ribosome modulation factor (58 aa).

Positions 1–28 (MKRQKRDRFERAHTQGFKAGLHGRSKDN) are disordered.

The protein belongs to the ribosome modulation factor family.

It is found in the cytoplasm. Its function is as follows. During stationary phase, converts 70S ribosomes to an inactive dimeric form (100S ribosomes). In Idiomarina loihiensis (strain ATCC BAA-735 / DSM 15497 / L2-TR), this protein is Ribosome modulation factor.